Reading from the N-terminus, the 100-residue chain is Large ribosomal subunit protein uL23 (100 aa).

It belongs to the universal ribosomal protein uL23 family. Part of the 50S ribosomal subunit. Contacts protein L29, and trigger factor when it is bound to the ribosome.

In terms of biological role, one of the early assembly proteins it binds 23S rRNA. One of the proteins that surrounds the polypeptide exit tunnel on the outside of the ribosome. Forms the main docking site for trigger factor binding to the ribosome. The protein is Large ribosomal subunit protein uL23 of Mycolicibacterium gilvum (strain PYR-GCK) (Mycobacterium gilvum (strain PYR-GCK)).